Here is a 40-residue protein sequence, read N- to C-terminus: Adenylate kinase (40 aa).

Residue 10–15 (GAGKGT) participates in ATP binding. The tract at residues 30–40 (STGDMFIKAIK) is NMP. Threonine 31 is an AMP binding site.

This sequence belongs to the adenylate kinase family. Monomer.

It is found in the cytoplasm. The enzyme catalyses AMP + ATP = 2 ADP. It functions in the pathway purine metabolism; AMP biosynthesis via salvage pathway; AMP from ADP: step 1/1. In terms of biological role, catalyzes the reversible transfer of the terminal phosphate group between ATP and AMP. Plays an important role in cellular energy homeostasis and in adenine nucleotide metabolism. The protein is Adenylate kinase (adk) of Staphylococcus carnosus.